The chain runs to 441 residues: Ribosomal protein uS12 methylthiotransferase RimO (441 aa).

The MTTase N-terminal domain occupies 7 to 117 (PKISFVSLGC…VLDAVHRAKP (111 aa)). Positions 16, 52, 81, 148, 152, and 155 each coordinate [4Fe-4S] cluster. Positions 134–371 (LTPRHYAYLK…MARQQAISAR (238 aa)) constitute a Radical SAM core domain. Residues 374 to 440 (KRKVGTRQQI…AYDLHGTVAG (67 aa)) form the TRAM domain.

Belongs to the methylthiotransferase family. RimO subfamily. Requires [4Fe-4S] cluster as cofactor.

It localises to the cytoplasm. The catalysed reaction is L-aspartate(89)-[ribosomal protein uS12]-hydrogen + (sulfur carrier)-SH + AH2 + 2 S-adenosyl-L-methionine = 3-methylsulfanyl-L-aspartate(89)-[ribosomal protein uS12]-hydrogen + (sulfur carrier)-H + 5'-deoxyadenosine + L-methionine + A + S-adenosyl-L-homocysteine + 2 H(+). Its function is as follows. Catalyzes the methylthiolation of an aspartic acid residue of ribosomal protein uS12. This Rhodopseudomonas palustris (strain HaA2) protein is Ribosomal protein uS12 methylthiotransferase RimO.